Here is a 289-residue protein sequence, read N- to C-terminus: MLKIGIIPNEDKDEELKYTRILVDSIKKCGGTAIVCDDIALKLGDKESNINEDNIVDMSDVMVCLGGDGTFLKAARMTVVKGKPLLGVNLGKLGFLADVDKNDIENAVKRLVEDKFTVDERMMLDTVIVRDGKIIAEDIVLNDVVISRGAISRILHLKTYINDAFMDLYPGDGLIISTPTGSTAYSLSAGGPLVEPDVDLIICTPICPHLLYSRSFITTADRVIKVVVAESSSHEAMVTVDGQNGYEVRGGDVIITKKSRIRMPMVRLNGKNFFDVLRGKIYDRGESMK.

Asp68 functions as the Proton acceptor in the catalytic mechanism. NAD(+)-binding positions include 68–69 (DG), Lys73, 142–143 (ND), Arg153, Asp172, 183–188 (TAYSLS), and Gln243.

It belongs to the NAD kinase family. It depends on a divalent metal cation as a cofactor.

The protein resides in the cytoplasm. The catalysed reaction is NAD(+) + ATP = ADP + NADP(+) + H(+). Its function is as follows. Involved in the regulation of the intracellular balance of NAD and NADP, and is a key enzyme in the biosynthesis of NADP. Catalyzes specifically the phosphorylation on 2'-hydroxyl of the adenosine moiety of NAD to yield NADP. The sequence is that of NAD kinase from Acetivibrio thermocellus (strain ATCC 27405 / DSM 1237 / JCM 9322 / NBRC 103400 / NCIMB 10682 / NRRL B-4536 / VPI 7372) (Clostridium thermocellum).